The chain runs to 500 residues: Glycerol kinase (500 aa).

An ADP-binding site is contributed by Thr-13. The ATP site is built by Thr-13, Thr-14, and Ser-15. Thr-13 is a binding site for sn-glycerol 3-phosphate. Residue Arg-17 participates in ADP binding. Arg-83, Glu-84, Tyr-135, and Asp-244 together coordinate sn-glycerol 3-phosphate. Positions 83, 84, 135, 244, and 245 each coordinate glycerol. ADP contacts are provided by Thr-266 and Gly-309. ATP-binding residues include Thr-266, Gly-309, Gln-313, and Gly-410. Residues Gly-410 and Asn-414 each coordinate ADP.

This sequence belongs to the FGGY kinase family.

It carries out the reaction glycerol + ATP = sn-glycerol 3-phosphate + ADP + H(+). It participates in polyol metabolism; glycerol degradation via glycerol kinase pathway; sn-glycerol 3-phosphate from glycerol: step 1/1. Inhibited by fructose 1,6-bisphosphate (FBP). Key enzyme in the regulation of glycerol uptake and metabolism. Catalyzes the phosphorylation of glycerol to yield sn-glycerol 3-phosphate. This Burkholderia cenocepacia (strain HI2424) protein is Glycerol kinase.